Consider the following 539-residue polypeptide: Sporozoite-associated protein (539 aa).

N-linked (GlcNAc...) asparagine glycosylation is found at Asn-31, Asn-90, Asn-102, Asn-149, and Asn-167. A disordered region spans residues 126-153; the sequence is LTQSPPPAAAPQSPSPRAILSPRNVSKT. The segment covering 192–215 has biased composition (low complexity); sequence VVAEKSNTPTTPKTTPNGKWTGKN. Residues 192-231 form a disordered region; sequence VVAEKSNTPTTPKTTPNGKWTGKNANATIETSNTDHTPPS. Polar residues predominate over residues 216-228; the sequence is ANATIETSNTDHT. N-linked (GlcNAc...) asparagine glycans are attached at residues Asn-217, Asn-271, and Asn-288. Residues 303–355 form a disordered region; it reads TLISRAQDDKPGTKGGSDETSSSTAASNERQPMFPNDNDDDDIDQTYCPGVES. Residues 320-332 are compositionally biased toward polar residues; it reads DETSSSTAASNER. 2 N-linked (GlcNAc...) asparagine glycosylation sites follow: Asn-427 and Asn-503.

Saliva (at protein level). Female salivary gland. Female midgut.

The protein localises to the secreted. Functionally, binds heparan sulfate proteoglycans present on the mammalian cell surface. Modulates host immune responses at the site of inoculation via decreasing the expression of TNF-alpha/TNF, IL-1beta/IL1B, IFN-gamma/IFNG, IL4, MMP9, TGF-beta and ICAM1. Its function is as follows. (Microbial infection) Interacts with the surface of Plasmodium berghei sporozoites. Promotes Plasmodium berghei transmission to the mouse host. Does not affect Plasmodium berghei sporozoite viability. (Microbial infection) Interacts with the surface of Plasmodium falciparum sporozoites. The protein is Sporozoite-associated protein of Anopheles gambiae (African malaria mosquito).